A 313-amino-acid chain; its full sequence is Olfactory receptor 1f45 (313 aa).

At 1-25 (MSSTNQSSVTEFLLLGLSRQPQQQQ) the chain is on the extracellular side. A glycan (N-linked (GlcNAc...) asparagine) is linked at Asn5. The chain crosses the membrane as a helical span at residues 26–50 (LLFLLFLIMYLATVLGNLLIILAIG). Residues 51 to 57 (TDSRLHT) lie on the Cytoplasmic side of the membrane. A helical membrane pass occupies residues 58–79 (PMYFFLSNLSFVDVCFSSTTVP). Topologically, residues 80–100 (KVLANHILGSQAISFSGCLTQ) are extracellular. Residues Cys97 and Cys189 are joined by a disulfide bond. Residues 101–120 (LYFLAVFGNMDNFLLAVMSY) form a helical membrane-spanning segment. The Cytoplasmic segment spans residues 121 to 139 (DRFVAICHPLHYTTKMTRQ). The chain crosses the membrane as a helical span at residues 140–158 (LCVLLVVGSWVVANMNCLL). The Extracellular segment spans residues 159–196 (HILLMARLSFCADNMIPHFFCDGTPLLKLSCSDTHLNE). Residues 197 to 219 (LMILTEGAVVMVTPFVCILISYI) form a helical membrane-spanning segment. The Cytoplasmic segment spans residues 220–236 (HITCAVLRVSSPRGGWK). Residues 237–260 (SFSTCGSHLAVVCLFYGTVIAVYF) traverse the membrane as a helical segment. Residues 261 to 272 (NPSSSHLAGRDM) lie on the Extracellular side of the membrane. Residues 273-292 (AAAVMYAVVTPMLNPFIYSL) form a helical membrane-spanning segment. At 293 to 313 (RNSDMKAALRKVLAMRFPSKQ) the chain is on the cytoplasmic side.

The protein belongs to the G-protein coupled receptor 1 family. Olfactory epithelium.

It localises to the cell membrane. Functionally, odorant receptor. This is Olfactory receptor 1f45 (Or1f45) from Rattus norvegicus (Rat).